We begin with the raw amino-acid sequence, 318 residues long: uncharacterized protein (318 aa).

The tract at residues 19 to 63 is disordered; sequence VPPDARHHEPRPGMTDHPDTGNGIGLTGRPPRAIPDPAPRSSHGP. A compositionally biased stretch (basic and acidic residues) spans 21-37; that stretch reads PDARHHEPRPGMTDHPD. 72–79 serves as a coordination point for ATP; the sequence is QKGGVGKT.

Belongs to the ParA family.

In terms of biological role, may play a role in septum formation. This is an uncharacterized protein from Mycobacterium tuberculosis (strain CDC 1551 / Oshkosh).